We begin with the raw amino-acid sequence, 310 residues long: MNTQTRETTSMSDAQDKAGTLIEALPWIQRFAGTTMVIKYGGNAMVNDELRRAFAEDVVFLHHVGIHPVVVHGGGPQINAMLSRLGIESEFKGGLRVTTPEAMDVVRMVLTGQVGRELVGLINSHGPYAVGMSGEDGGLLRAVRTGTVVDGEEVDLGLVGEVVGVNPEGIVDILAAGRIPVISTVAPEIADDGSTTGQVLNVNADTAAAAVASALGASKLVILTDVEGLYANWPDKSSLISSLTASELREMLPRLESGMIPKMAACLQAVDDGVERAHIVDGRLPHSMLLETFTTAGIGTQVVPDEETNA.

Residues 74–75, R96, and N201 each bind substrate; that span reads GG.

It belongs to the acetylglutamate kinase family. ArgB subfamily.

It is found in the cytoplasm. The catalysed reaction is N-acetyl-L-glutamate + ATP = N-acetyl-L-glutamyl 5-phosphate + ADP. The protein operates within amino-acid biosynthesis; L-arginine biosynthesis; N(2)-acetyl-L-ornithine from L-glutamate: step 2/4. In terms of biological role, catalyzes the ATP-dependent phosphorylation of N-acetyl-L-glutamate. In Arthrobacter sp. (strain FB24), this protein is Acetylglutamate kinase.